The sequence spans 426 residues: Gamma-glutamyl phosphate reductase (426 aa).

The protein belongs to the gamma-glutamyl phosphate reductase family.

Its subcellular location is the cytoplasm. It catalyses the reaction L-glutamate 5-semialdehyde + phosphate + NADP(+) = L-glutamyl 5-phosphate + NADPH + H(+). It participates in amino-acid biosynthesis; L-proline biosynthesis; L-glutamate 5-semialdehyde from L-glutamate: step 2/2. Its function is as follows. Catalyzes the NADPH-dependent reduction of L-glutamate 5-phosphate into L-glutamate 5-semialdehyde and phosphate. The product spontaneously undergoes cyclization to form 1-pyrroline-5-carboxylate. In Nitrobacter winogradskyi (strain ATCC 25391 / DSM 10237 / CIP 104748 / NCIMB 11846 / Nb-255), this protein is Gamma-glutamyl phosphate reductase.